Reading from the N-terminus, the 599-residue chain is Elongation factor 4 (599 aa).

A tr-type G domain is found at 2-184; sequence KNIRNFSIIA…RLVRDIPPPE (183 aa). GTP contacts are provided by residues 14–19 and 131–134; these read DHGKST and NKID.

The protein belongs to the TRAFAC class translation factor GTPase superfamily. Classic translation factor GTPase family. LepA subfamily.

Its subcellular location is the cell inner membrane. It catalyses the reaction GTP + H2O = GDP + phosphate + H(+). Required for accurate and efficient protein synthesis under certain stress conditions. May act as a fidelity factor of the translation reaction, by catalyzing a one-codon backward translocation of tRNAs on improperly translocated ribosomes. Back-translocation proceeds from a post-translocation (POST) complex to a pre-translocation (PRE) complex, thus giving elongation factor G a second chance to translocate the tRNAs correctly. Binds to ribosomes in a GTP-dependent manner. The chain is Elongation factor 4 from Klebsiella pneumoniae (strain 342).